The sequence spans 495 residues: Putative BTB/POZ domain-containing protein L98 (495 aa).

One can recognise a BTB domain in the interval 15–85 (SDLTIEFVDN…FYGIETTNDY (71 aa)).

The protein belongs to the mimivirus BTB/WD family.

The protein is Putative BTB/POZ domain-containing protein L98 of Acanthamoeba polyphaga (Amoeba).